Here is a 138-residue protein sequence, read N- to C-terminus: Ribosome maturation factor RimP (138 aa).

It belongs to the RimP family.

The protein resides in the cytoplasm. In terms of biological role, required for maturation of 30S ribosomal subunits. This is Ribosome maturation factor RimP from Campylobacter curvus (strain 525.92).